Here is a 176-residue protein sequence, read N- to C-terminus: 3-hydroxyacyl-[acyl-carrier-protein] dehydratase FabZ (176 aa).

The active site involves H54.

This sequence belongs to the thioester dehydratase family. FabZ subfamily.

It is found in the cytoplasm. The enzyme catalyses a (3R)-hydroxyacyl-[ACP] = a (2E)-enoyl-[ACP] + H2O. Its function is as follows. Involved in unsaturated fatty acids biosynthesis. Catalyzes the dehydration of short chain beta-hydroxyacyl-ACPs and long chain saturated and unsaturated beta-hydroxyacyl-ACPs. The sequence is that of 3-hydroxyacyl-[acyl-carrier-protein] dehydratase FabZ from Yersinia pseudotuberculosis serotype O:1b (strain IP 31758).